A 137-amino-acid chain; its full sequence is Small ribosomal subunit protein uS9 (137 aa).

It belongs to the universal ribosomal protein uS9 family.

The sequence is that of Small ribosomal subunit protein uS9 from Picosynechococcus sp. (strain ATCC 27264 / PCC 7002 / PR-6) (Agmenellum quadruplicatum).